Reading from the N-terminus, the 202-residue chain is Dephospho-CoA kinase (202 aa).

Residues 4–202 form the DPCK domain; sequence FLGLTGGIAT…EGVCHKSGMS (199 aa). Position 12–17 (12–17) interacts with ATP; that stretch reads ATGKTT.

The protein belongs to the CoaE family.

The protein resides in the cytoplasm. The catalysed reaction is 3'-dephospho-CoA + ATP = ADP + CoA + H(+). It participates in cofactor biosynthesis; coenzyme A biosynthesis; CoA from (R)-pantothenate: step 5/5. Its function is as follows. Catalyzes the phosphorylation of the 3'-hydroxyl group of dephosphocoenzyme A to form coenzyme A. The protein is Dephospho-CoA kinase of Latilactobacillus sakei subsp. sakei (strain 23K) (Lactobacillus sakei subsp. sakei).